Consider the following 75-residue polypeptide: Endogenous retrovirus group K member 7 Np9 protein (75 aa).

Residues 24–43 are disordered; it reads PKRQRPSRTGHDDDGGFVEK. A compositionally biased stretch (basic and acidic residues) spans 32 to 43; that stretch reads TGHDDDGGFVEK.

It is found in the nucleus. Its function is as follows. May possess a function in tumorigenesis. The polypeptide is Endogenous retrovirus group K member 7 Np9 protein (ERVK-7) (Homo sapiens (Human)).